The following is a 42-amino-acid chain: MEIVTEKDLKNIEEQLKSVVRDQDRFRLIKANANSFISQVNK.

This is an uncharacterized protein from Dictyostelium discoideum (Social amoeba).